We begin with the raw amino-acid sequence, 374 residues long: O-methyltransferase acrG (374 aa).

The S-adenosyl-L-homocysteine site is built by Tyr-19, Asn-70, Asp-96, Ser-128, and Phe-129. Phe-245 serves as a coordination point for Mg(2+).

This sequence belongs to the methyltransferase superfamily. Type-7 methyltransferase family.

It participates in secondary metabolite biosynthesis. In terms of biological role, O-methyltransferase; part of the cluster that mediates the biosynthesis of acurin A, a highly reduced polyketide coupled to a serine via a peptide bond. The activities of the highly reducing polyketide synthase acrA and the nonribosomal peptide synthetase acrB are collectively responsible for the synthesis of the acurin A core structure with a heptaketide backbone produced by acrA covalently fused to a L-serine by acrB. After the formation of the PK-NRP hybrid product, it is detached from acrB by reductive release to set up the formation of the lactam ring by aldol condensation. The hydrolyase acrC then catalyzes water loss to generate a double bond in the ring. This double bond is probably reduced, which is followed by three oxidations at C-22 to generate the carboxylic acid moiety, involving probably the FAD-binding monooxygenase acrE and the cytochrome P450 monooxygenases acrD and acrF. Finally, a last methylation step performed by the O-methyltransferase acrG leads to the production of acurin A. The chain is O-methyltransferase acrG from Aspergillus aculeatus (strain ATCC 16872 / CBS 172.66 / WB 5094).